The primary structure comprises 332 residues: Ketol-acid reductoisomerase (NADP(+)) (332 aa).

One can recognise a KARI N-terminal Rossmann domain in the interval 2-182; it reads ANIYYDEDAS…GATRAGLIET (181 aa). NADP(+) is bound by residues 25–28, S51, S53, and 83–86; these read YGSQ and DTVQ. The active site involves H108. G134 lines the NADP(+) pocket. One can recognise a KARI C-terminal knotted domain in the interval 183–327; that stretch reads TFKEETETDL…KELRKMMPWL (145 aa). 4 residues coordinate Mg(2+): D191, E195, E227, and E231. S252 is a binding site for substrate.

Belongs to the ketol-acid reductoisomerase family. It depends on Mg(2+) as a cofactor.

The catalysed reaction is (2R)-2,3-dihydroxy-3-methylbutanoate + NADP(+) = (2S)-2-acetolactate + NADPH + H(+). It carries out the reaction (2R,3R)-2,3-dihydroxy-3-methylpentanoate + NADP(+) = (S)-2-ethyl-2-hydroxy-3-oxobutanoate + NADPH + H(+). Its pathway is amino-acid biosynthesis; L-isoleucine biosynthesis; L-isoleucine from 2-oxobutanoate: step 2/4. The protein operates within amino-acid biosynthesis; L-valine biosynthesis; L-valine from pyruvate: step 2/4. Functionally, involved in the biosynthesis of branched-chain amino acids (BCAA). Catalyzes an alkyl-migration followed by a ketol-acid reduction of (S)-2-acetolactate (S2AL) to yield (R)-2,3-dihydroxy-isovalerate. In the isomerase reaction, S2AL is rearranged via a Mg-dependent methyl migration to produce 3-hydroxy-3-methyl-2-ketobutyrate (HMKB). In the reductase reaction, this 2-ketoacid undergoes a metal-dependent reduction by NADPH to yield (R)-2,3-dihydroxy-isovalerate. The protein is Ketol-acid reductoisomerase (NADP(+)) of Sulfurihydrogenibium sp. (strain YO3AOP1).